We begin with the raw amino-acid sequence, 46 residues long: Esculentin-1SEa (46 aa).

Cysteine 40 and cysteine 46 form a disulfide bridge.

As to expression, expressed by the skin glands.

It is found in the secreted. Functionally, mast cell degranulating peptide. Causes histamine release from rat peritoneal mast cells in vitro. Has antibacterial activity against the Gram-negative bacterium E.coli K12 and Gram-positive bacterium M.luteus NCT C2665. The protein is Esculentin-1SEa of Lithobates sevosus (Dusky gopher frog).